The following is a 510-amino-acid chain: NADP-dependent fatty aldehyde dehydrogenase (510 aa).

229-234 (GSVGGG) provides a ligand contact to NADP(+). Catalysis depends on residues Glu-253 and Cys-289.

The protein belongs to the aldehyde dehydrogenase family. Homodimer.

The enzyme catalyses an aldehyde + NADP(+) + H2O = a carboxylate + NADPH + 2 H(+). In terms of biological role, catalyzes the oxidation of long-chain aliphatic aldehydes to acids. May be implicated in controlling luminescence as it catalyzes the oxidation of the fatty aldehyde substrate for the light-emitting reaction. The chain is NADP-dependent fatty aldehyde dehydrogenase (aldH) from Vibrio harveyi (Beneckea harveyi).